A 365-amino-acid chain; its full sequence is Protein RecA (365 aa).

73–80 (GPESSGKT) lines the ATP pocket.

It belongs to the RecA family.

The protein localises to the cytoplasm. Functionally, can catalyze the hydrolysis of ATP in the presence of single-stranded DNA, the ATP-dependent uptake of single-stranded DNA by duplex DNA, and the ATP-dependent hybridization of homologous single-stranded DNAs. It interacts with LexA causing its activation and leading to its autocatalytic cleavage. The sequence is that of Protein RecA from Prochlorococcus marinus (strain MIT 9301).